The chain runs to 559 residues: Sporulation protein kinase mde3 (559 aa).

The Protein kinase domain occupies Y21 to F323. ATP is bound by residues L27–V35 and K53. D150 (proton acceptor) is an active-site residue.

Belongs to the protein kinase superfamily. Ser/Thr protein kinase family.

It carries out the reaction L-seryl-[protein] + ATP = O-phospho-L-seryl-[protein] + ADP + H(+). The catalysed reaction is L-threonyl-[protein] + ATP = O-phospho-L-threonyl-[protein] + ADP + H(+). Protein kinase which is essential for spore formation. The sequence is that of Sporulation protein kinase mde3 (mde3) from Schizosaccharomyces pombe (strain 972 / ATCC 24843) (Fission yeast).